A 481-amino-acid polypeptide reads, in one-letter code: uncharacterized protein (481 aa).

This sequence belongs to the UbiD family.

This is an uncharacterized protein from Archaeoglobus fulgidus (strain ATCC 49558 / DSM 4304 / JCM 9628 / NBRC 100126 / VC-16).